The following is a 50-amino-acid chain: Sperm protamine P1 (50 aa).

Cystine bridges form between cysteine 7–cysteine 15 and cysteine 39–cysteine 47.

Belongs to the protamine P1 family. As to quaternary structure, cross-linked by interchain disulfide bonds around the DNA-helix. Testis.

It localises to the nucleus. The protein resides in the chromosome. Protamines substitute for histones in the chromatin of sperm during the haploid phase of spermatogenesis. They compact sperm DNA into a highly condensed, stable and inactive complex. This is Sperm protamine P1 (PRM1) from Oryctolagus cuniculus (Rabbit).